The chain runs to 156 residues: Ribosomal RNA large subunit methyltransferase H (156 aa).

S-adenosyl-L-methionine is bound by residues L73, G104, and 123–128 (LSPLTL).

It belongs to the RNA methyltransferase RlmH family. Homodimer.

Its subcellular location is the cytoplasm. The catalysed reaction is pseudouridine(1915) in 23S rRNA + S-adenosyl-L-methionine = N(3)-methylpseudouridine(1915) in 23S rRNA + S-adenosyl-L-homocysteine + H(+). Its function is as follows. Specifically methylates the pseudouridine at position 1915 (m3Psi1915) in 23S rRNA. This is Ribosomal RNA large subunit methyltransferase H from Hahella chejuensis (strain KCTC 2396).